A 170-amino-acid chain; its full sequence is Envelope protein 168 (170 aa).

A topological domain (intravirion) is located at residue M1. A helical transmembrane segment spans residues 2 to 22; the sequence is FYPVVQILIGIILVIILILGF. Residues 23–170 are Virion surface-facing; the sequence is YHLKRKPPKK…TVMGIARNVL (148 aa).

The protein belongs to the asfivirus envelope protein p22 family.

It is found in the virion membrane. It localises to the host cell membrane. The sequence is that of Envelope protein 168 from African swine fever virus (isolate Tick/South Africa/Pretoriuskop Pr4/1996) (ASFV).